Here is a 248-residue protein sequence, read N- to C-terminus: Small ribosomal subunit protein uS3 (248 aa).

In terms of domain architecture, KH type-2 spans 39-108; the sequence is IRKLVSQKLA…TVAVNVAEIP (70 aa). A disordered region spans residues 212-248; it reads KTETLARPPRKSDERRREDGERPSRRRPTARRRPGGE. Residues 221–234 show a composition bias toward basic and acidic residues; sequence RKSDERRREDGERP. Over residues 235 to 248 the composition is skewed to basic residues; sequence SRRRPTARRRPGGE.

Belongs to the universal ribosomal protein uS3 family. Part of the 30S ribosomal subunit. Forms a tight complex with proteins S10 and S14.

Binds the lower part of the 30S subunit head. Binds mRNA in the 70S ribosome, positioning it for translation. This Deinococcus geothermalis (strain DSM 11300 / CIP 105573 / AG-3a) protein is Small ribosomal subunit protein uS3.